The sequence spans 103 residues: Large ribosomal subunit protein eL14 (103 aa).

The protein belongs to the eukaryotic ribosomal protein eL14 family.

This chain is Large ribosomal subunit protein eL14, found in Pyrobaculum neutrophilum (strain DSM 2338 / JCM 9278 / NBRC 100436 / V24Sta) (Thermoproteus neutrophilus).